The primary structure comprises 555 residues: CTP synthase (555 aa).

The segment at 1 to 267 (MTKFVFVTGG…AQQVLKFMHL (267 aa)) is amidoligase domain. Ser13 serves as a coordination point for CTP. UTP is bound at residue Ser13. ATP-binding positions include 14–19 (SIGKGI) and Asp71. 2 residues coordinate Mg(2+): Asp71 and Glu141. CTP contacts are provided by residues 148-150 (DIE), 188-193 (KTKPTQ), and Lys224. UTP-binding positions include 188 to 193 (KTKPTQ) and Lys224. Residue Ala242 participates in ATP binding. One can recognise a Glutamine amidotransferase type-1 domain in the interval 299-535 (YVQLSDAYLS…VGACLADNGN (237 aa)). L-glutamine is bound at residue Gly354. The active-site Nucleophile; for glutamine hydrolysis is the Cys381. L-glutamine contacts are provided by residues 382–385 (LGMQ), Glu405, and Arg463. Active-site residues include His508 and Glu510. Residues 536–555 (NANHHDSTPAEPLVSEPLSS) form a disordered region.

This sequence belongs to the CTP synthase family. In terms of assembly, homotetramer.

It catalyses the reaction UTP + L-glutamine + ATP + H2O = CTP + L-glutamate + ADP + phosphate + 2 H(+). The enzyme catalyses L-glutamine + H2O = L-glutamate + NH4(+). It carries out the reaction UTP + NH4(+) + ATP = CTP + ADP + phosphate + 2 H(+). The protein operates within pyrimidine metabolism; CTP biosynthesis via de novo pathway; CTP from UDP: step 2/2. Its activity is regulated as follows. Allosterically activated by GTP, when glutamine is the substrate; GTP has no effect on the reaction when ammonia is the substrate. The allosteric effector GTP functions by stabilizing the protein conformation that binds the tetrahedral intermediate(s) formed during glutamine hydrolysis. Inhibited by the product CTP, via allosteric rather than competitive inhibition. Catalyzes the ATP-dependent amination of UTP to CTP with either L-glutamine or ammonia as the source of nitrogen. Regulates intracellular CTP levels through interactions with the four ribonucleotide triphosphates. This is CTP synthase from Acaryochloris marina (strain MBIC 11017).